The chain runs to 433 residues: Dihydrolipoyllysine-residue acetyltransferase component of pyruvate dehydrogenase complex (433 aa).

The Lipoyl-binding domain occupies 2-77 (AFEFRLPDIG…VVGDVIVKID (76 aa)). Lys-43 carries the post-translational modification N6-lipoyllysine. Disordered regions lie at residues 80 to 134 (DAEE…PSVR) and 164 to 204 (YLNG…FPET). Basic and acidic residues-rich tracts occupy residues 84–103 (MQFK…KEQE) and 117–126 (EKTEVDESKT). The Peripheral subunit-binding (PSBD) domain maps to 128–165 (KAMPSVRKYARENGVNIKAVNGSGKNGRITKEDIDAYL). A compositionally biased stretch (low complexity) spans 166 to 188 (NGGSSEEGSNTSVASESTSSDVV). His-404 is a catalytic residue.

It belongs to the 2-oxoacid dehydrogenase family. As to quaternary structure, forms a 24-polypeptide structural core with octahedral symmetry. (R)-lipoate serves as cofactor.

The enzyme catalyses N(6)-[(R)-dihydrolipoyl]-L-lysyl-[protein] + acetyl-CoA = N(6)-[(R)-S(8)-acetyldihydrolipoyl]-L-lysyl-[protein] + CoA. Functionally, the pyruvate dehydrogenase complex catalyzes the overall conversion of pyruvate to acetyl-CoA and CO(2). It contains multiple copies of three enzymatic components: pyruvate dehydrogenase (E1), dihydrolipoamide acetyltransferase (E2) and lipoamide dehydrogenase (E3). The polypeptide is Dihydrolipoyllysine-residue acetyltransferase component of pyruvate dehydrogenase complex (pdhC) (Staphylococcus epidermidis (strain ATCC 12228 / FDA PCI 1200)).